Here is a 185-residue protein sequence, read N- to C-terminus: Hypoxanthine/guanine phosphoribosyltransferase (185 aa).

This sequence belongs to the purine/pyrimidine phosphoribosyltransferase family. Archaeal HPRT subfamily. In terms of assembly, homodimer.

It is found in the cytoplasm. The enzyme catalyses IMP + diphosphate = hypoxanthine + 5-phospho-alpha-D-ribose 1-diphosphate. The catalysed reaction is GMP + diphosphate = guanine + 5-phospho-alpha-D-ribose 1-diphosphate. The protein operates within purine metabolism; IMP biosynthesis via salvage pathway; IMP from hypoxanthine: step 1/1. Catalyzes a salvage reaction resulting in the formation of IMP that is energically less costly than de novo synthesis. The protein is Hypoxanthine/guanine phosphoribosyltransferase of Aciduliprofundum boonei (strain DSM 19572 / T469).